A 96-amino-acid chain; its full sequence is Cytoplasmic envelopment protein 3 (96 aa).

Glycine 2 is lipidated: N-myristoyl glycine; by host. The short motif at 18–19 (LI) is the Di-leucine-like internalization motif element. Positions 37 to 43 (DIESEEE) are asp/Glu-rich (acidic). Residue serine 40 is modified to Phosphoserine. Positions 44-96 (GNFYVPPDMRGVTRAPGRQRLRSSDPPSRHTHRRTPGGACPATQFPPPMSDSE) are disordered. Residues 87-96 (QFPPPMSDSE) show a composition bias toward pro residues.

Belongs to the herpesviridae cytoplasmic envelopment protein 3 family. Interacts with cytoplasmic envelopment protein 2; this interaction is essential for the proper localization of each protein to the assembly complex and thus for the production of infectious virus. Interacts with gE (via C-terminus). Interacts with gD (via C-terminus). Interacts with UL56. Myristoylation and palmitoylation (probably on one or more of the nearby cysteines at the N-terminus) enable membrane-binding and Golgi apparatus-specific targeting and are essential for efficient packaging. In terms of processing, phosphorylated. Phosphorylation does not seem to be required for recycling to the host Golgi apparatus. Packaging is selective for underphosphorylated forms.

Its subcellular location is the virion tegument. It is found in the virion membrane. The protein resides in the host cell membrane. It localises to the host Golgi apparatus membrane. Plays an important role in the cytoplasmic envelopment of tegument proteins and capsids during the assembly and egress processes. Also participates in viral entry at the fusion step probably by regulating the core fusion machinery. This Homo sapiens (Human) protein is Cytoplasmic envelopment protein 3.